The sequence spans 315 residues: Leucine-rich repeat-containing protein 75B (315 aa).

The tract at residues 1 to 23 is disordered; that stretch reads MGARLGRRAGPEAGSEAGAAAGC. The segment covering 11–23 has biased composition (low complexity); that stretch reads PEAGSEAGAAAGC. LRR repeat units follow at residues 182 to 195 and 207 to 220; these read LAVL…LSDE and LPRL…GNRL. The tract at residues 284 to 315 is disordered; the sequence is PEGSAAGATTPASTWDSTAAGLGPEPQACCAR. The segment covering 286 to 297 has biased composition (low complexity); sequence GSAAGATTPAST.

This sequence belongs to the LRRC75 family.

Its function is as follows. May suppress myogenic differentiation by modulating MYOG expression and Erk1/2 signaling. The chain is Leucine-rich repeat-containing protein 75B from Homo sapiens (Human).